The following is a 159-amino-acid chain: Ribosomal RNA large subunit methyltransferase H (159 aa).

S-adenosyl-L-methionine-binding residues include Leu-76 and Gly-108.

The protein belongs to the RNA methyltransferase RlmH family. As to quaternary structure, homodimer.

It localises to the cytoplasm. It carries out the reaction pseudouridine(1915) in 23S rRNA + S-adenosyl-L-methionine = N(3)-methylpseudouridine(1915) in 23S rRNA + S-adenosyl-L-homocysteine + H(+). Functionally, specifically methylates the pseudouridine at position 1915 (m3Psi1915) in 23S rRNA. The polypeptide is Ribosomal RNA large subunit methyltransferase H (Natranaerobius thermophilus (strain ATCC BAA-1301 / DSM 18059 / JW/NM-WN-LF)).